A 290-amino-acid chain; its full sequence is Beta carbonic anhydrase 6, mitochondrial (290 aa).

The N-terminal 20 residues, 1–20 (MAFTLGGRARRLVSATSVHQ), are a transit peptide targeting the mitochondrion. Ser-122 is modified (phosphoserine). Position 226 is an S-nitrosocysteine (Cys-226).

It belongs to the beta-class carbonic anhydrase family. As to expression, strongly expressed in aerial tissues including leaves, stems, flowers and siliques, and, to a lower extent, in roots. Accumulates in guard cells.

The protein resides in the mitochondrion. It carries out the reaction hydrogencarbonate + H(+) = CO2 + H2O. Functionally, reversible hydration of carbon dioxide. This chain is Beta carbonic anhydrase 6, mitochondrial (BCA6), found in Arabidopsis thaliana (Mouse-ear cress).